The primary structure comprises 206 residues: Orotate phosphoribosyltransferase (206 aa).

5-phospho-alpha-D-ribose 1-diphosphate is bound by residues arginine 114, lysine 115, lysine 118, histidine 120, and 141-149 (EDVVTTGQS). Orotate contacts are provided by threonine 145 and arginine 173.

It belongs to the purine/pyrimidine phosphoribosyltransferase family. PyrE subfamily. In terms of assembly, homodimer. The cofactor is Mg(2+).

It carries out the reaction orotidine 5'-phosphate + diphosphate = orotate + 5-phospho-alpha-D-ribose 1-diphosphate. It participates in pyrimidine metabolism; UMP biosynthesis via de novo pathway; UMP from orotate: step 1/2. In terms of biological role, catalyzes the transfer of a ribosyl phosphate group from 5-phosphoribose 1-diphosphate to orotate, leading to the formation of orotidine monophosphate (OMP). The polypeptide is Orotate phosphoribosyltransferase (Nostoc sp. (strain PCC 7120 / SAG 25.82 / UTEX 2576)).